Consider the following 395-residue polypeptide: Dihydrolipoyllysine-residue succinyltransferase component of 2-oxoglutarate dehydrogenase complex (395 aa).

A Lipoyl-binding domain is found at 2–77; that stretch reads RVKIIVPSLG…AVGEEIGEIN (76 aa). Position 43 is an N6-lipoyllysine (Lys-43). Residues 111-148 enclose the Peripheral subunit-binding (PSBD) domain; the sequence is TLAPSVQKLVTENKLDPNNIKGTGRDGRITKGDVLATI. Catalysis depends on residues His-366 and Asp-370.

This sequence belongs to the 2-oxoacid dehydrogenase family. Forms a 24-polypeptide structural core with octahedral symmetry. Part of the 2-oxoglutarate dehydrogenase (OGDH) complex composed of E1 (2-oxoglutarate dehydrogenase), E2 (dihydrolipoamide succinyltransferase) and E3 (dihydrolipoamide dehydrogenase); the complex contains multiple copies of the three enzymatic components (E1, E2 and E3). It depends on (R)-lipoate as a cofactor.

The catalysed reaction is N(6)-[(R)-dihydrolipoyl]-L-lysyl-[protein] + succinyl-CoA = N(6)-[(R)-S(8)-succinyldihydrolipoyl]-L-lysyl-[protein] + CoA. Its pathway is amino-acid degradation; L-lysine degradation via saccharopine pathway; glutaryl-CoA from L-lysine: step 6/6. Its function is as follows. E2 component of the 2-oxoglutarate dehydrogenase (OGDH) complex which catalyzes the second step in the conversion of 2-oxoglutarate to succinyl-CoA and CO(2). The protein is Dihydrolipoyllysine-residue succinyltransferase component of 2-oxoglutarate dehydrogenase complex (sucB) of Rickettsia conorii (strain ATCC VR-613 / Malish 7).